The following is a 121-amino-acid chain: Non-specific lipid-transfer protein 9 (121 aa).

Residues 1-27 (MRKSISIAFVIAITIFMSHLNVFTVYS) form the signal peptide. 4 disulfide bridges follow: cysteine 31/cysteine 80, cysteine 41/cysteine 57, cysteine 58/cysteine 102, and cysteine 78/cysteine 116.

The protein belongs to the plant LTP family.

Plant non-specific lipid-transfer proteins transfer phospholipids as well as galactolipids across membranes. May play a role in wax or cutin deposition in the cell walls of expanding epidermal cells and certain secretory tissues. The chain is Non-specific lipid-transfer protein 9 (LTP9) from Arabidopsis thaliana (Mouse-ear cress).